Reading from the N-terminus, the 406-residue chain is LIM/homeobox protein Lhx1 (406 aa).

2 consecutive LIM zinc-binding domains span residues 4–54 (CAGC…CKND) and 63–117 (CAGC…CKED). Disordered regions lie at residues 128 to 189 (NSLH…TIKA) and 293 to 374 (YDFF…EVFG). Residues 137 to 148 (SDPSLSPDSQDP) are compositionally biased toward low complexity. Residues 151-167 (DDAKDSESANVSDKEGG) show a composition bias toward basic and acidic residues. Residue Ser162 is modified to Phosphoserine. A DNA-binding region (homeobox) is located at residues 180–239 (RRGPRTTIKAKQLETLKAAFAATPKPTRHIREQLAQETGLNMRVIQVWFQNRRSKERRMK). The span at 315-327 (PSSGPSGTPLGGL) shows a compositional bias: low complexity. A compositionally biased stretch (pro residues) spans 352-362 (GDSPSPEPSLP).

As to quaternary structure, interacts with LDB1 via the tandem LIM domains.

It localises to the nucleus. In terms of biological role, potential transcription factor. May play a role in early mesoderm formation and later in lateral mesoderm differentiation and neurogenesis. The protein is LIM/homeobox protein Lhx1 (LHX1) of Saimiri boliviensis boliviensis (Bolivian squirrel monkey).